Reading from the N-terminus, the 348-residue chain is RNA 3'-terminal phosphate cyclase (348 aa).

Residues Gln-101 and 286-289 each bind ATP; that span reads HMAD. Residue His-312 is the Tele-AMP-histidine intermediate of the active site.

The protein belongs to the RNA 3'-terminal cyclase family. Type 1 subfamily.

Its subcellular location is the cytoplasm. It carries out the reaction a 3'-end 3'-phospho-ribonucleotide-RNA + ATP = a 3'-end 2',3'-cyclophospho-ribonucleotide-RNA + AMP + diphosphate. Its function is as follows. Catalyzes the conversion of 3'-phosphate to a 2',3'-cyclic phosphodiester at the end of RNA. The mechanism of action of the enzyme occurs in 3 steps: (A) adenylation of the enzyme by ATP; (B) transfer of adenylate to an RNA-N3'P to produce RNA-N3'PP5'A; (C) and attack of the adjacent 2'-hydroxyl on the 3'-phosphorus in the diester linkage to produce the cyclic end product. The biological role of this enzyme is unknown but it is likely to function in some aspects of cellular RNA processing. The chain is RNA 3'-terminal phosphate cyclase from Pyrobaculum aerophilum (strain ATCC 51768 / DSM 7523 / JCM 9630 / CIP 104966 / NBRC 100827 / IM2).